The primary structure comprises 212 residues: Thymidylate kinase (212 aa).

11 to 18 (GGEGVGKS) contributes to the ATP binding site.

The protein belongs to the thymidylate kinase family.

The catalysed reaction is dTMP + ATP = dTDP + ADP. Its function is as follows. Phosphorylation of dTMP to form dTDP in both de novo and salvage pathways of dTTP synthesis. The protein is Thymidylate kinase of Chromohalobacter salexigens (strain ATCC BAA-138 / DSM 3043 / CIP 106854 / NCIMB 13768 / 1H11).